The primary structure comprises 296 residues: uncharacterized protein (296 aa).

Transmembrane regions (helical) follow at residues 8–28 (LFVL…ALAP), 34–54 (LAFG…AVWI), 63–83 (WAWP…PLFF), 89–109 (TGIA…AGTL), 121–141 (SWWI…SDSS), 147–167 (VAGV…TLIS), 183–203 (VFMI…ISWI), 208–228 (GLGT…FLFA), 238–258 (AAVT…VFFI), and 261–281 (MLSP…LVIS). 2 consecutive EamA domains span residues 15-138 (FFWG…LLFS) and 158-282 (ASFA…VISA).

The protein belongs to the EamA transporter family.

The protein localises to the cell membrane. This is an uncharacterized protein from Bacillus subtilis (strain 168).